Here is a 148-residue protein sequence, read N- to C-terminus: MELNNLKPAIGATKDRKRIGRGTGSGHGKTATKGHKGQKARSGGSIKAGFEGGQMPMQRRLPKRGFTPLMRKDYAIVNIGQLDVFESGSTVDAEALLNAGLISGVKDGIKVLADGDVTKSLVVKVHKYSAKAKEKIEAVGGKIEEITL.

A disordered region spans residues 1 to 61 (MELNNLKPAI…GGQMPMQRRL (61 aa)). Residues 30 to 39 (TATKGHKGQK) show a composition bias toward basic residues.

It belongs to the universal ribosomal protein uL15 family. In terms of assembly, part of the 50S ribosomal subunit.

Its function is as follows. Binds to the 23S rRNA. The chain is Large ribosomal subunit protein uL15 from Geobacter metallireducens (strain ATCC 53774 / DSM 7210 / GS-15).